Consider the following 170-residue polypeptide: Protein-lysine myristoyltransferase HlyC (170 aa).

The active site involves H23. H151 contacts heme.

Belongs to the RTX toxin acyltransferase family. In terms of assembly, monomer. Post-translationally, proteolytically cleaved by the protease systems ClpAP, ClpXP and FtsH, leading to its degradation.

The protein resides in the cytoplasm. It carries out the reaction tetradecanoyl-[ACP] + L-lysyl-[protein] = N(6)-tetradecanoyl-L-lysyl-[protein] + holo-[ACP] + H(+). Its activity is regulated as follows. The acyltransferase activity is inhibited by heme. Its function is as follows. Protein-lysine myristoyltransferase that catalyzes myristoylation of the protoxin (HlyA) at two internal lysine residues, thereby converting it to the active toxin. This is Protein-lysine myristoyltransferase HlyC from Escherichia coli.